We begin with the raw amino-acid sequence, 143 residues long: Nucleoside diphosphate kinase (143 aa).

Residues Lys11, Phe59, Arg87, Thr93, Arg104, and Asn114 each coordinate ATP. His117 acts as the Pros-phosphohistidine intermediate in catalysis.

This sequence belongs to the NDK family. As to quaternary structure, homotetramer. It depends on Mg(2+) as a cofactor.

The protein localises to the cytoplasm. It catalyses the reaction a 2'-deoxyribonucleoside 5'-diphosphate + ATP = a 2'-deoxyribonucleoside 5'-triphosphate + ADP. The enzyme catalyses a ribonucleoside 5'-diphosphate + ATP = a ribonucleoside 5'-triphosphate + ADP. In terms of biological role, major role in the synthesis of nucleoside triphosphates other than ATP. The ATP gamma phosphate is transferred to the NDP beta phosphate via a ping-pong mechanism, using a phosphorylated active-site intermediate. The chain is Nucleoside diphosphate kinase from Escherichia coli O7:K1 (strain IAI39 / ExPEC).